The following is a 345-amino-acid chain: Dihydroorotate dehydrogenase (quinone) (345 aa).

FMN-binding positions include 65-69 (AGLDK) and Thr89. Lys69 contacts substrate. Substrate is bound at residue 114–118 (NRLGF). FMN-binding residues include Asn146 and Asn179. Substrate is bound at residue Asn179. Residue Ser182 is the Nucleophile of the active site. Asn184 is a binding site for substrate. 2 residues coordinate FMN: Lys224 and Thr252. Residue 253-254 (NT) participates in substrate binding. Residues Gly275, Gly304, and 325–326 (YT) each bind FMN.

Belongs to the dihydroorotate dehydrogenase family. Type 2 subfamily. In terms of assembly, monomer. Requires FMN as cofactor.

It localises to the cell membrane. The catalysed reaction is (S)-dihydroorotate + a quinone = orotate + a quinol. It functions in the pathway pyrimidine metabolism; UMP biosynthesis via de novo pathway; orotate from (S)-dihydroorotate (quinone route): step 1/1. In terms of biological role, catalyzes the conversion of dihydroorotate to orotate with quinone as electron acceptor. This is Dihydroorotate dehydrogenase (quinone) from Leptothrix cholodnii (strain ATCC 51168 / LMG 8142 / SP-6) (Leptothrix discophora (strain SP-6)).